The sequence spans 71 residues: Small ribosomal subunit protein bS21 (71 aa).

This sequence belongs to the bacterial ribosomal protein bS21 family.

The protein is Small ribosomal subunit protein bS21 of Pseudoalteromonas atlantica (strain T6c / ATCC BAA-1087).